Consider the following 476-residue polypeptide: F-box protein At5g07670 (476 aa).

Residues 59 to 111 (PDFTLLLPDLILIRVIQKIPNSQRKNLSLVCKRWFRLHGRLVRSFKVSDWEFL) enclose the F-box domain.

The chain is F-box protein At5g07670 from Arabidopsis thaliana (Mouse-ear cress).